The primary structure comprises 125 residues: Holo-[acyl-carrier-protein] synthase (125 aa).

Residues Asp-8 and Glu-57 each contribute to the Mg(2+) site.

This sequence belongs to the P-Pant transferase superfamily. AcpS family. Mg(2+) is required as a cofactor.

It localises to the cytoplasm. The catalysed reaction is apo-[ACP] + CoA = holo-[ACP] + adenosine 3',5'-bisphosphate + H(+). In terms of biological role, transfers the 4'-phosphopantetheine moiety from coenzyme A to a Ser of acyl-carrier-protein. The sequence is that of Holo-[acyl-carrier-protein] synthase from Natranaerobius thermophilus (strain ATCC BAA-1301 / DSM 18059 / JW/NM-WN-LF).